The primary structure comprises 1939 residues: Myosin-6 (1939 aa).

The Myosin N-terminal SH3-like domain maps to Asp-32–Pro-81. One can recognise a Myosin motor domain in the interval Asp-85–Asp-780. N6,N6,N6-trimethyllysine is present on Lys-129. Residue Gly-178–Thr-185 coordinates ATP. A Phosphothreonine modification is found at Thr-379. Ser-417 is subject to Phosphoserine. Actin-binding regions lie at residues Leu-657–Glu-679 and Lys-759–Gly-773. An IQ domain is found at Leu-783–Ala-812. Residues Leu-842–Glu-1939 adopt a coiled-coil conformation. Ser-1139 is modified (phosphoserine). At Tyr-1261 the chain carries Phosphotyrosine. Ser-1271 is modified (phosphoserine). Phosphothreonine occurs at positions 1277 and 1284. Ser-1309 carries the phosphoserine modification. Tyr-1310 bears the Phosphotyrosine mark. Thr-1311 carries the post-translational modification Phosphothreonine. Phosphoserine is present on Ser-1512. A Phosphothreonine modification is found at Thr-1515. Composition is skewed to basic and acidic residues over residues Gly-1826–Glu-1837 and Lys-1925–Glu-1939. Disordered regions lie at residues Gly-1826–Ile-1849 and Glu-1909–Glu-1939.

This sequence belongs to the TRAFAC class myosin-kinesin ATPase superfamily. Myosin family. Muscle myosin is a hexameric protein that consists of 2 heavy chain subunits (MHC), 2 alkali light chain subunits (MLC) and 2 regulatory light chain subunits (MLC-2).

Its subcellular location is the cytoplasm. It localises to the myofibril. Functionally, muscle contraction. The polypeptide is Myosin-6 (MYH6) (Homo sapiens (Human)).